Here is a 509-residue protein sequence, read N- to C-terminus: Butyrophilin-like protein 1 (509 aa).

The signal sequence occupies residues 1-27 (MMKGSPSVPPAGCLLPLLLLLFTGVSG). Ig-like V-type domains lie at 28–139 (EVSW…QEVS) and 151–237 (PLVH…KAIL). At 28-250 (EVSWFSVKGP…PFFPKTCPWK (223 aa)) the chain is on the extracellular side. 2 disulfides stabilise this stretch: cysteine 53–cysteine 127 and cysteine 167–cysteine 221. Residues 251–271 (VALVCSVLILLVLLGGISLGI) traverse the membrane as a helical segment. Residues 272–509 (WKEHQVKRRE…SMGLSATAQP (238 aa)) are Cytoplasmic-facing. One can recognise a B30.2/SPRY domain in the interval 316 to 509 (RKALYKEDWK…SMGLSATAQP (194 aa)). The disordered stretch occupies residues 349–372 (MPDQDKTDSRTEENRGEETVSSSQ). The segment covering 351–366 (DQDKTDSRTEENRGEE) has biased composition (basic and acidic residues).

This sequence belongs to the immunoglobulin superfamily. BTN/MOG family.

It is found in the membrane. The sequence is that of Butyrophilin-like protein 1 (Btnl1) from Mus musculus (Mouse).